Consider the following 498-residue polypeptide: Ribose import ATP-binding protein RbsA (498 aa).

2 consecutive ABC transporter domains span residues 2-237 and 247-491; these read LALQ…VGRD and VTPG…TGQQ. 34–41 lines the ATP pocket; the sequence is GENGAGKS.

Belongs to the ABC transporter superfamily. Ribose importer (TC 3.A.1.2.1) family. As to quaternary structure, the complex is composed of an ATP-binding protein (RbsA), two transmembrane proteins (RbsC) and a solute-binding protein (RbsB).

The protein resides in the cell membrane. It catalyses the reaction D-ribose(out) + ATP + H2O = D-ribose(in) + ADP + phosphate + H(+). Part of the ABC transporter complex RbsABC involved in ribose import. Responsible for energy coupling to the transport system. The protein is Ribose import ATP-binding protein RbsA of Deinococcus geothermalis (strain DSM 11300 / CIP 105573 / AG-3a).